Consider the following 1732-residue polypeptide: Transient receptor potential cation channel subfamily M member 3 (1732 aa).

Residues 1–894 are Cytoplasmic-facing; sequence MPGPWGTVYF…RKIYEFYNAP (894 aa). Calmodulin-binding regions lie at residues 41–64, 192–215, 300–323, 601–624, and 793–816; these read WTIRKLCHAAFLPSVRLLKAQKSW, NFELQPKLKQVFGKGLIKAAMTTG, TGKYGAEVKLRRQLEKHISLQKIN, RKRFRTLYHNLFGPKRPKALKLLG, and RKNSGLKVILGILLPPSILSLEFK. A required for the inhibitory action of G-beta/gamma-subunits of heterotrimeric G-proteins region spans residues 617–625; it reads PKALKLLGM. Serine 796 is a binding site for 1,2-dioctanoyl-sn-glycero-3-phospho-(1D-myo-inositol-4,5-bisphosphate). The disordered stretch occupies residues 829–851; that stretch reads EIHLQEKEPEEPEKPTKEKDEED. Over residues 831 to 847 the composition is skewed to basic and acidic residues; sequence HLQEKEPEEPEKPTKEK. The helical transmembrane segment at 895 to 918 threads the bilayer; that stretch reads IVKFWFYTLAYIGYLMLFNYIVLV. Residues 919-925 are Extracellular-facing; the sequence is KMERWPS. The helical transmembrane segment at 926 to 948 threads the bilayer; it reads TQEWIVISYIFTLGIEKMREILM. Over 949–964 the chain is Cytoplasmic; the sequence is SEPGKLLQKVKVWLQE. A helical membrane pass occupies residues 965 to 985; it reads YWNVTDLIAILLFSVGMILRL. Residues 986-989 lie on the Extracellular side of the membrane; the sequence is QDQP. The chain crosses the membrane as a helical span at residues 990 to 1013; it reads FRSDGRVIYCVNIIYWYIRLLDIF. The Cytoplasmic segment spans residues 1014–1028; that stretch reads GVNKYLGPYVMMIGK. 1,2-dioctanoyl-sn-glycero-3-phospho-(1D-myo-inositol-4,5-bisphosphate)-binding residues include lysine 1017 and tyrosine 1018. A helical membrane pass occupies residues 1029–1056; that stretch reads MMIDMMYFVIIMLVVLMSFGVARQAILF. Residues 1057 to 1073 lie on the Extracellular side of the membrane; the sequence is PNEEPSWKLAKNIFYMP. Residues 1074-1101 constitute an intramembrane region (pore-forming); it reads YWMIYGEVFADQIDPPCGQNETREDGKT. At 1102 to 1111 the chain is on the extracellular side; sequence IQLPPCKTGA. A helical transmembrane segment spans residues 1112-1137; it reads WIVPAIMACYLLVANILLVNLLIAVF. The Cytoplasmic segment spans residues 1138–1732; that stretch reads NNTFFEVKSI…AFHSFESKHN (595 aa). Residues 1610–1732 form a disordered region; the sequence is EREAELSHPS…AFHSFESKHN (123 aa). Composition is skewed to polar residues over residues 1635 to 1653 and 1690 to 1701; these read PISSQEAENADRTLSNNIT and NTASLRNPFQRS.

This sequence belongs to the transient receptor (TC 1.A.4) family. LTrpC subfamily. TRPM3 sub-subfamily. In terms of assembly, homotetramer. Interacts with TRPM1; the interaction results in the formation of a heteromultimeric cation channel complex that are functionally different from the homomeric channels.

It is found in the cell membrane. The enzyme catalyses Ca(2+)(in) = Ca(2+)(out). The catalysed reaction is Mn(2+)(in) = Mn(2+)(out). It catalyses the reaction Zn(2+)(in) = Zn(2+)(out). It carries out the reaction Mg(2+)(in) = Mg(2+)(out). The enzyme catalyses Na(+)(in) = Na(+)(out). With respect to regulation, activated by the neurosteroid pregnelonone sulfate (PregS). PregS activates the channel by shifting its current-voltage activation curve toward more negative membrane potentials and also potentiates temperature-induced activation. Activated by heat. Intracellular Ca(2+) inhibits TRPM3 probably via interaction with Ca(2+)/calmodulin. Intracellular Mg(2+) inhibits TRPM3 activity. Both intracellular and extracellular protons block TRPM3 through propable binding sites in the pore region. Positively regulated by phosphoinositide phosphoinositol 4,5-biphosphate (PI(4,5)P2). Strongly inhibited by activation of G(i)-coupled receptors via direct binding with G-beta/gamma-subunits of heterotrimeric G-proteins. Its activity is regulated as follows. Insensitive to pregnenolone sulfate (PregS) or heat. Not inhibited by G-beta/gamma-subunits of heterotrimeric G-proteins. Functionally, constitutively active, non-selective divalent cation-conducting channel that is permeable to Ca(2+), Mn(2+), and Mg(2+), with a high permeability for Ca(2+). However, can be enhanced by increasing temperature and by ligands, including the endogenous neurosteroid pregnenolone sulfate and sphingosine-1 and suppressed by intracellular Mg(2+). Implicated in a variety of cellular processes, including insulin/peptide secretion, vascular constriction and dilation, noxious heat sensing, inflammatory and spontaneous pain sensitivity. In neurons of the dorsal root ganglia, functions as thermosensitive channel for the detection of noxious heat and spontaneous pain. Suggested to function as an ionotropic steroid receptor in beta-cell, indeed pregnenolone sulfate leads to Ca(2+) influx and enhanced insulin secretion. Mediates Zn(2+) uptake into the lumen of pancreatic beta cell secretory granules, thereby regulating insulin secretion. Forms heteromultimeric ion channels with TRPM1 which are permeable for Ca(2+) and Zn(2+) ions. Exists as multiple splice variants which differ significantly in their biophysical properties. In terms of biological role, displays strongly reduced permeability for divalent cations and high selectivity toward monovalent cations. No channel activity. The sequence is that of Transient receptor potential cation channel subfamily M member 3 from Mus musculus (Mouse).